Consider the following 330-residue polypeptide: Protoheme IX farnesyltransferase (330 aa).

Helical transmembrane passes span 30-50, 58-78, 106-126, 127-147, 155-175, 182-202, 228-248, 249-269, and 281-301; these read LVKP…MWMA, FFIT…INMV, LIFS…FTNL, LAAG…THWL, IVIG…ATTG, WVMF…LAIL, ILLY…PLGM, LGSF…WKAV, and AASL…AMGL.

This sequence belongs to the UbiA prenyltransferase family. Protoheme IX farnesyltransferase subfamily.

Its subcellular location is the cell inner membrane. It catalyses the reaction heme b + (2E,6E)-farnesyl diphosphate + H2O = Fe(II)-heme o + diphosphate. Its pathway is porphyrin-containing compound metabolism; heme O biosynthesis; heme O from protoheme: step 1/1. Its function is as follows. Converts heme B (protoheme IX) to heme O by substitution of the vinyl group on carbon 2 of heme B porphyrin ring with a hydroxyethyl farnesyl side group. The protein is Protoheme IX farnesyltransferase of Synechococcus sp. (strain JA-2-3B'a(2-13)) (Cyanobacteria bacterium Yellowstone B-Prime).